The following is a 273-amino-acid chain: Formamidopyrimidine-DNA glycosylase (273 aa).

Proline 2 serves as the catalytic Schiff-base intermediate with DNA. Glutamate 3 serves as the catalytic Proton donor. The Proton donor; for beta-elimination activity role is filled by lysine 58. The DNA site is built by histidine 91 and arginine 110. The FPG-type zinc-finger motif lies at glutamine 238–cysteine 272. Residue arginine 262 is the Proton donor; for delta-elimination activity of the active site.

This sequence belongs to the FPG family. As to quaternary structure, monomer. Zn(2+) is required as a cofactor.

The enzyme catalyses Hydrolysis of DNA containing ring-opened 7-methylguanine residues, releasing 2,6-diamino-4-hydroxy-5-(N-methyl)formamidopyrimidine.. It catalyses the reaction 2'-deoxyribonucleotide-(2'-deoxyribose 5'-phosphate)-2'-deoxyribonucleotide-DNA = a 3'-end 2'-deoxyribonucleotide-(2,3-dehydro-2,3-deoxyribose 5'-phosphate)-DNA + a 5'-end 5'-phospho-2'-deoxyribonucleoside-DNA + H(+). Its function is as follows. Involved in base excision repair of DNA damaged by oxidation or by mutagenic agents. Acts as a DNA glycosylase that recognizes and removes damaged bases. Has a preference for oxidized purines, such as 7,8-dihydro-8-oxoguanine (8-oxoG). Has AP (apurinic/apyrimidinic) lyase activity and introduces nicks in the DNA strand. Cleaves the DNA backbone by beta-delta elimination to generate a single-strand break at the site of the removed base with both 3'- and 5'-phosphates. The polypeptide is Formamidopyrimidine-DNA glycosylase (Streptococcus agalactiae serotype Ia (strain ATCC 27591 / A909 / CDC SS700)).